The sequence spans 507 residues: Myocyte-specific enhancer factor 2A (507 aa).

Positions 3 to 57 (RKKIQITRIMDERNRQVTFTKRKFGLMKKAYELSVLCDCEIALIIFNSSNKLFQY) constitute an MADS-box domain. The segment at residues 58-86 (ASTDMDKVLLKYTEYNEPHESGTNSDIVE) is a DNA-binding region (mef2-type). Residue Ser59 is modified to Phosphoserine; by CK2. Phosphoserine is present on residues Ser98 and Ser235. Residues 175–269 (ADSSMLSPPQ…GGGNLGMNSR (95 aa)) form a disordered region. Polar residues predominate over residues 209-245 (LSTSDLTVPNGAGSSPVGNGFVNSRASPNLVGTTGAN). At Lys249 the chain carries N6-acetyllysine. Ser255 bears the Phosphoserine mark. The interval 266 to 283 (MNSRKPDLRVVIPPSSKG) is required for interaction with MAPKs. A beta domain region spans residues 289–296 (SEEEELEL). 2 positions are modified to phosphothreonine; by MAPK7 and MAPK14: Thr312 and Thr319. Ser355 is modified (phosphoserine; by MAPK7). Over residues 390–402 (SNLSINTNQNINI) the composition is skewed to polar residues. Positions 390–507 (SNLSINTNQN…KRMRMDAWVT (118 aa)) are disordered. Lys403 bears the N6-acetyllysine; alternate mark. A Glycyl lysine isopeptide (Lys-Gly) (interchain with G-Cter in SUMO); alternate cross-link involves residue Lys403. Ser408 carries the post-translational modification Phosphoserine; by CDK5. Residue Thr415 is modified to Phosphothreonine. The segment covering 423–443 (QPPPPSQAPQPQPPQPQPQPQ) has biased composition (pro residues). Ser453 carries the post-translational modification Phosphoserine. Positions 453–466 (SPVDSLSSSSSSYD) are enriched in low complexity. Composition is skewed to basic and acidic residues over residues 467 to 477 (GSDREDPRGDF) and 488 to 507 (NTEDRESPSVKRMRMDAWVT).

This sequence belongs to the MEF2 family. In terms of assembly, binds DNA as a homo- or heterodimer. Dimerizes with MEF2D. Interacts with HDAC7. Interacts with PIAS1; the interaction enhances sumoylation. Interacts with HDAC4, HDAC9 and SLC2A4RG. Interacts (via the N-terminal) with MAPK7; the interaction results in the phosphorylation and transcriptional activity of MEF2A. Post-translationally, constitutive phosphorylation on Ser-408 promotes Lys-403 sumoylation thus preventing acetylation at this site. Dephosphorylation on Ser-408 by PPP3CA upon neuron depolarization promotes a switch from sumoylation to acetylation on residue Lys-403 leading to inhibition of dendrite claw differentiation. Phosphorylation on Thr-312 and Thr-319 are the main sites involved in p38 MAPK signaling and activate transcription. Phosphorylated on these sites by MAPK14/p38alpha and MAPK11/p38beta, but not by MAPK13/p38delta nor by MAPK12/p38gamma. Phosphorylation on Ser-408 by CDK5 induced by neurotoxicity inhibits MEF2A transcriptional activation leading to apoptosis of cortical neurons. Phosphorylation on Thr-312, Thr-319 and Ser-355 can be induced by EGF. Sumoylation on Lys-403 is enhanced by PIAS1 and represses transcriptional activity. Phosphorylation on Ser-408 is required for sumoylation. Has no effect on nuclear location nor on DNA binding. Sumoylated with SUMO1 and, to a lesser extent with SUMO2 and SUMO3. PIASx facilitates sumoylation in postsynaptic dendrites in the cerebellar cortex and promotes their morphogenesis. In terms of processing, acetylation on Lys-403 activates transcriptional activity. Acetylated by p300 on several sites in diffentiating myocytes. Acetylation on Lys-4 increases DNA binding and transactivation. Hyperacetylation by p300 leads to enhanced cardiac myocyte growth and heart failure. Post-translationally, proteolytically cleaved on several sites by caspase 3 and caspase 7 following neurotoxicity. Preferentially cleaves the CDK5-mediated hyperphosphorylated form which leads to cortical neuron apoptosis and transcriptional inactivation.

Its subcellular location is the nucleus. Transcriptional activator which binds specifically to the MEF2 element, 5'-YTA[AT](4)TAR-3', found in numerous muscle-specific genes. Also involved in the activation of numerous growth factor- and stress-induced genes. Mediates cellular functions not only in skeletal and cardiac muscle development, but also in neuronal differentiation and survival. Plays diverse roles in the control of cell growth, survival and apoptosis via p38 MAPK signaling in muscle-specific and/or growth factor-related transcription. In cerebellar granule neurons, phosphorylated and sumoylated MEF2A represses transcription of NUR77 promoting synaptic differentiation. Associates with chromatin to the ZNF16 promoter. The protein is Myocyte-specific enhancer factor 2A (MEF2A) of Sus scrofa (Pig).